We begin with the raw amino-acid sequence, 302 residues long: MSVFIDKNTKVMVQGITGSTALFHTKQMLDYGTKIVAGVTPGKGGQVVEGVPVFNTVEEAKNETGATVSVIYVPAPFAADSILEAADADLDMVICITEHIPVLDMVKVKRYLQGRKTRLVGPNCPGVITADECKIGIMPGYIHKKGHVGVVSRSGTLTYEAVHQLTEEGIGQTTAVGIGGDPVNGTNFIDVLKAFNEDDETKAVVMIGEIGGTAEEEAAEWIKANMTKPVVGFIGGQTAPPGKRMGHAGAIISGGKGTAEEKIKTLNSCGVKTAATPSEIGSTLIEAAKEAGIYEALLTVNK.

CoA-binding positions include 17-20, Lys-43, and 96-98; these read TGST and ITE. A substrate-binding site is contributed by Tyr-159. The Tele-phosphohistidine intermediate role is filled by His-247.

It belongs to the succinate/malate CoA ligase alpha subunit family. In terms of assembly, heterotetramer of two alpha and two beta subunits.

The catalysed reaction is succinate + ATP + CoA = succinyl-CoA + ADP + phosphate. It carries out the reaction GTP + succinate + CoA = succinyl-CoA + GDP + phosphate. It participates in carbohydrate metabolism; tricarboxylic acid cycle; succinate from succinyl-CoA (ligase route): step 1/1. In terms of biological role, succinyl-CoA synthetase functions in the citric acid cycle (TCA), coupling the hydrolysis of succinyl-CoA to the synthesis of either ATP or GTP and thus represents the only step of substrate-level phosphorylation in the TCA. The alpha subunit of the enzyme binds the substrates coenzyme A and phosphate, while succinate binding and nucleotide specificity is provided by the beta subunit. The polypeptide is Succinate--CoA ligase [ADP-forming] subunit alpha (Staphylococcus aureus (strain MSSA476)).